A 439-amino-acid polypeptide reads, in one-letter code: Xylose isomerase (439 aa).

Residues His-101 and Asp-104 contribute to the active site. Mg(2+)-binding residues include Glu-232, Glu-268, His-271, Asp-296, Asp-307, Asp-309, and Asp-339.

This sequence belongs to the xylose isomerase family. Homotetramer. The cofactor is Mg(2+).

It localises to the cytoplasm. It catalyses the reaction alpha-D-xylose = alpha-D-xylulofuranose. The polypeptide is Xylose isomerase (xylA) (Thermoanaerobacterium thermosaccharolyticum (strain ATCC 7956 / DSM 571 / NCIMB 9385 / NCA 3814 / NCTC 13789 / WDCM 00135 / 2032) (Clostridium thermosaccharolyticum)).